Here is a 271-residue protein sequence, read N- to C-terminus: Monalysin (271 aa).

Residues 1-33 (MTIKEELGQPQSHSIELDEVSKEAASTRAALTS) constitute a propeptide that is removed on maturation. The segment at 102–170 (IPQNVTTTLS…FTDTTEMKGP (69 aa)) is pore-forming domain.

In terms of assembly, pro-Monalysin forms a stable donut-like 18-mer complex composed of two disk-shaped nonamers held together by N-terminal swapping of the pro-peptides. After proteolytic cleavage, the inactive 18-mer complex probably dissociates into two disk-shaped active nonamers in which the transmembrane segments are unmasked and ready to engage the conformational change leading to the pore formation into the target membrane. Multimerizes into circular-like structures and barrel-like aggregates. Requires N-terminal cleavage to become fully active. The metalloprotease AprA can induce the rapid cleavage of pro-Monalysin into its active form. Can also be processed by trypsin.

It localises to the secreted. The protein localises to the host cell membrane. Functionally, pore-forming toxin that contributes to the virulence of P.entomophila against Drosophila, playing an important role in host intestinal damage and lethality. Displays cytolytic and hemolytic activity. The sequence is that of Monalysin from Pseudomonas entomophila (strain L48).